Here is a 391-residue protein sequence, read N- to C-terminus: F-box/kelch-repeat protein At3g16740 (391 aa).

An F-box domain is found at 1–47 (MVQISDLPRDLTEEVLSRIPVTSMRAVRFTCKKWNTLSKDRSFTKKH). Kelch repeat units lie at residues 104–154 (KIFH…YEEK) and 163–215 (ILRF…LKGN).

As to quaternary structure, part of a SCF (ASK-cullin-F-box) protein ligase complex. Interacts with ASK11.

Its subcellular location is the nucleus. It functions in the pathway protein modification; protein ubiquitination. Functionally, component of SCF(ASK-cullin-F-box) E3 ubiquitin ligase complexes, which may mediate the ubiquitination and subsequent proteasomal degradation of target proteins. The polypeptide is F-box/kelch-repeat protein At3g16740 (Arabidopsis thaliana (Mouse-ear cress)).